The chain runs to 268 residues: Ribosomal RNA small subunit methyltransferase A (268 aa).

Residues asparagine 12, leucine 14, glycine 38, glutamate 59, aspartate 82, and asparagine 107 each contribute to the S-adenosyl-L-methionine site.

Belongs to the class I-like SAM-binding methyltransferase superfamily. rRNA adenine N(6)-methyltransferase family. RsmA subfamily.

The protein resides in the cytoplasm. The enzyme catalyses adenosine(1518)/adenosine(1519) in 16S rRNA + 4 S-adenosyl-L-methionine = N(6)-dimethyladenosine(1518)/N(6)-dimethyladenosine(1519) in 16S rRNA + 4 S-adenosyl-L-homocysteine + 4 H(+). In terms of biological role, specifically dimethylates two adjacent adenosines (A1518 and A1519) in the loop of a conserved hairpin near the 3'-end of 16S rRNA in the 30S particle. May play a critical role in biogenesis of 30S subunits. The protein is Ribosomal RNA small subunit methyltransferase A of Aster yellows witches'-broom phytoplasma (strain AYWB).